The following is a 445-amino-acid chain: Questin oxidase (445 aa).

This sequence belongs to the questin oxidase family. Requires NADPH as cofactor. In terms of tissue distribution, specifically expressed in conidia.

It participates in secondary metabolite biosynthesis. Questin oxidase; part of the gene cluster that mediates the biosynthesis of trypacidin, a mycotoxin with antiprotozoal activity and that plays a role in the infection process. The pathway begins with the synthesis of atrochrysone thioester by the polyketide synthase (PKS) tpcC. The atrochrysone carboxyl ACP thioesterase tpcB then breaks the thioester bond and releases the atrochrysone carboxylic acid from tpcC. The decarboxylase tpcK converts atrochrysone carboxylic acid to atrochrysone which is further reduced into emodin anthrone. The next step is performed by the emodin anthrone oxygenase tpcL that catalyzes the oxidation of emodinanthrone to emodin. Emodin O-methyltransferase encoded by tpcA catalyzes methylation of the 8-hydroxy group of emodin to form questin. Ring cleavage of questin by questin oxidase tpcI leads to desmethylsulochrin via several intermediates including questin epoxide. Another methylation step catalyzed by tpcM leads to the formation of sulochrin which is further converted to monomethylsulfochrin by tpcH. Finally, the tpcJ catalyzes the conversion of monomethylsulfochrin to trypacidin. Trypacidin is toxic for human pulmonary and bronchial epithelial cells by initiating the intracellular formation of nitric oxide (NO) and hydrogen peroxide (H(2)O(2)), thus triggering host necrotic cell death. The trypacidin pathway is also able to produce endocrocin via a distinct route from the endocrocin Enc pathway. This is Questin oxidase from Aspergillus fumigatus (strain ATCC MYA-4609 / CBS 101355 / FGSC A1100 / Af293) (Neosartorya fumigata).